Here is a 391-residue protein sequence, read N- to C-terminus: 1-deoxy-D-xylulose 5-phosphate reductoisomerase (391 aa).

NADPH-binding residues include threonine 11, glycine 12, serine 13, isoleucine 14, glycine 37, asparagine 39, and asparagine 125. Lysine 126 is a 1-deoxy-D-xylulose 5-phosphate binding site. Glutamate 127 contributes to the NADPH binding site. Aspartate 151 provides a ligand contact to Mn(2+). Residues serine 152, glutamate 153, serine 176, and histidine 199 each coordinate 1-deoxy-D-xylulose 5-phosphate. Glutamate 153 provides a ligand contact to Mn(2+). NADPH is bound at residue glycine 205. 1-deoxy-D-xylulose 5-phosphate contacts are provided by serine 212, asparagine 217, lysine 218, and glutamate 221. Glutamate 221 is a Mn(2+) binding site.

The protein belongs to the DXR family. The cofactor is Mg(2+). It depends on Mn(2+) as a cofactor.

The enzyme catalyses 2-C-methyl-D-erythritol 4-phosphate + NADP(+) = 1-deoxy-D-xylulose 5-phosphate + NADPH + H(+). It participates in isoprenoid biosynthesis; isopentenyl diphosphate biosynthesis via DXP pathway; isopentenyl diphosphate from 1-deoxy-D-xylulose 5-phosphate: step 1/6. In terms of biological role, catalyzes the NADPH-dependent rearrangement and reduction of 1-deoxy-D-xylulose-5-phosphate (DXP) to 2-C-methyl-D-erythritol 4-phosphate (MEP). This chain is 1-deoxy-D-xylulose 5-phosphate reductoisomerase, found in Heliobacterium modesticaldum (strain ATCC 51547 / Ice1).